Here is a 1276-residue protein sequence, read N- to C-terminus: MVEENETGTPGTSRTVTFHDGRKLTDAEHFVFFKVKEVIADKVAEAEILESIRKRSECKPTDEQFISDIINELFYSGEPPKGRKSERFIGPLFDPEKASTASGPMDCTDVVSYDSTHPNISEISKKEEVEMQSAIQQSLASSASQNISRPTMLMSNLEDMVRNPNFSTGLYNSGNTCWLNCLSQVLYSIPKFRSILYHCAPLSWHEQPITNVKIENQQHAELLMLFRGLFAELQFSEMKYIEVGPLINMVDKLSKSSKGPSTIGTQQDATEMLTLIFDWLQRAFDAALHAQLNPEFSNVSDEENLVISDSTTTAPNSDIIGAPPGYNAANLSLPSSSHVDPKSTLNPMYVNEKEPSSTPTSLFGTRSKTIEVNESMDTEAATSSNLPGNSVENHPNPAAPEVDDNKKAFCDKLKESFNNIFSSVCYTESVAEDGTVSVKSNVRNCPQFFQLQVTYGNLHDALEAATFDHGLGNTASHVRNLYDPLPAVIFFGLSRFSFNSNIESKLHDKFTFPKIIFMDRYLKCNKEQLVQLRSHRELCRDSLSEVRAKLSGLRRYPQGNGEVRLEDSFQTVWQAVSNFREFVTFYLKVSQKTFFSREDAHENTAFVGPLTPSTYQSSSDNCSSKFVKDGGKLFPTFTEGFFPGKAAFIETLQNMLEALKTEERDCLAEEARLQEVIDQTYEVPELQQHKYELHAIIVHSGEANRGHYWTYKLKKSIDGLEEWEKLNDQNADRVDWPKVESDSFGTGSRDAPSAYMLMYVRSDAEWLVSADKLTALEAFETIPPDLQEKVLQKRDEFKEKLQRFRENKEFNYQQFSVDSPTVQSTEETPSSFSWYRDELEDIDIGDENANPTKNDYLLNARLDSYSVPIAPDVETSEMKRMVSQMWNQITKIAPRKYTDSQDLLDSNLRSVMEGESGGINFINSRLGYDIHELRSDADNDVEGVYNAFINEYLGLVKDLHELQNSKFVVFVGFQLQRIHVPVLRYLLVRAMAVSELGIISQRANNELSGMSSNSHDKGTAMLQIALLLSHFFELGVMSAWGCRSSLENIHVILNDFKKKNSRGSEQIEVTYCAMIGARNARICNGLLREMAYFLESYSIFFVSQKHIEACTVFSTITMIKLIMQHMASKTLQLIDMEFHLSKNERRVRFEDIIREVVSSVCIIHHWSKSYSKEFQNEINLKELMGLLHLKVEFMVSLTSFEVADPKYECLQAFKAMVVNTVMDLERASNELDYDVLDGAVELRELKKYFKELQLTDVKVNNIITSYDPIIESLVKI.

A USP domain is found at 168–762; sequence TGLYNSGNTC…SAYMLMYVRS (595 aa). The active-site Nucleophile is the Cys-177. A disordered region spans residues 375–402; it reads SMDTEAATSSNLPGNSVENHPNPAAPEV. The span at 380–393 shows a compositional bias: polar residues; it reads AATSSNLPGNSVEN. His-707 acts as the Proton acceptor in catalysis.

The protein belongs to the peptidase C19 family.

It carries out the reaction Thiol-dependent hydrolysis of ester, thioester, amide, peptide and isopeptide bonds formed by the C-terminal Gly of ubiquitin (a 76-residue protein attached to proteins as an intracellular targeting signal).. This chain is Probable ubiquitin carboxyl-terminal hydrolase K02C4.3, found in Caenorhabditis elegans.